A 296-amino-acid polypeptide reads, in one-letter code: 4-hydroxy-tetrahydrodipicolinate synthase (296 aa).

A pyruvate-binding site is contributed by threonine 44. Tyrosine 132 serves as the catalytic Proton donor/acceptor. Residue lysine 162 is the Schiff-base intermediate with substrate of the active site. Pyruvate is bound at residue isoleucine 204.

It belongs to the DapA family. Homotetramer; dimer of dimers.

The protein resides in the cytoplasm. It carries out the reaction L-aspartate 4-semialdehyde + pyruvate = (2S,4S)-4-hydroxy-2,3,4,5-tetrahydrodipicolinate + H2O + H(+). The protein operates within amino-acid biosynthesis; L-lysine biosynthesis via DAP pathway; (S)-tetrahydrodipicolinate from L-aspartate: step 3/4. Its function is as follows. Catalyzes the condensation of (S)-aspartate-beta-semialdehyde [(S)-ASA] and pyruvate to 4-hydroxy-tetrahydrodipicolinate (HTPA). The polypeptide is 4-hydroxy-tetrahydrodipicolinate synthase (Novosphingobium aromaticivorans (strain ATCC 700278 / DSM 12444 / CCUG 56034 / CIP 105152 / NBRC 16084 / F199)).